The primary structure comprises 108 residues: Iron-sulfur cluster assembly protein CyaY (108 aa).

It belongs to the frataxin family.

In terms of biological role, involved in iron-sulfur (Fe-S) cluster assembly. May act as a regulator of Fe-S biogenesis. This Pseudomonas paraeruginosa (strain DSM 24068 / PA7) (Pseudomonas aeruginosa (strain PA7)) protein is Iron-sulfur cluster assembly protein CyaY.